We begin with the raw amino-acid sequence, 165 residues long: Shikimate kinase (165 aa).

12–17 is a binding site for ATP; that stretch reads GCGKST. S16 is a binding site for Mg(2+). Substrate contacts are provided by D34, R57, and G79. R116 serves as a coordination point for ATP. R133 contacts substrate.

The protein belongs to the shikimate kinase family. Monomer. Mg(2+) serves as cofactor.

The protein localises to the cytoplasm. The catalysed reaction is shikimate + ATP = 3-phosphoshikimate + ADP + H(+). It participates in metabolic intermediate biosynthesis; chorismate biosynthesis; chorismate from D-erythrose 4-phosphate and phosphoenolpyruvate: step 5/7. Catalyzes the specific phosphorylation of the 3-hydroxyl group of shikimic acid using ATP as a cosubstrate. The polypeptide is Shikimate kinase (Clostridium botulinum (strain Eklund 17B / Type B)).